Here is a 179-residue protein sequence, read N- to C-terminus: Negative modulator of initiation of replication (179 aa).

The interaction with DNA stretch occupies residues 86–87 (AV).

Belongs to the SeqA family. Homodimer. Polymerizes to form helical filaments.

It is found in the cytoplasm. Functionally, negative regulator of replication initiation, which contributes to regulation of DNA replication and ensures that replication initiation occurs exactly once per chromosome per cell cycle. Binds to pairs of hemimethylated GATC sequences in the oriC region, thus preventing assembly of replication proteins and re-initiation at newly replicated origins. Repression is relieved when the region becomes fully methylated. This chain is Negative modulator of initiation of replication, found in Shewanella woodyi (strain ATCC 51908 / MS32).